Here is a 1661-residue protein sequence, read N- to C-terminus: ATP-dependent bile acid permease (1661 aa).

Topologically, residues 1 to 33 (MHHVLNSTRPDHRFWFYDDVTQYGRTKYLNYYT) are lumenal. Asparagine 6 carries an N-linked (GlcNAc...) asparagine glycan. Residues 34–54 (PLVLLIFTVLFITYNIWKHYY) traverse the membrane as a helical segment. Residues 55-74 (YYDVLHLKQKNPIDELLYSS) lie on the Cytoplasmic side of the membrane. A helical transmembrane segment spans residues 75–95 (TDEDEQSPLINNNTITTNYVD). Residues 96–133 (NNCTKDALKNRHFSLEKLKSVKVNGEPHGTPEIVRRGF) lie on the Lumenal side of the membrane. Asparagine 97 is a glycosylation site (N-linked (GlcNAc...) asparagine). Residues 134–154 (IEKSRIILEFFLVLSQVIIHS) traverse the membrane as a helical segment. Over 155–166 (FILLHYVNKNPE) the chain is Cytoplasmic. Residues 167 to 187 (FTQQGTITGLVEWCALFIIVS) form a helical membrane-spanning segment. Residues 188–205 (LRLANVNQNFKFINKYPG) lie on the Lumenal side of the membrane. The chain crosses the membrane as a helical span at residues 206 to 226 (NLWSVSFINYLALFISMILPF). The Cytoplasmic portion of the chain corresponds to 227 to 345 (RSIFIHHINS…VKRKRIFSLN (119 aa)). The helical transmembrane segment at 346–366 (LFFFFSNYLVLQCFWAFLGSV) threads the bilayer. The ABC transmembrane type-1 1 domain occupies 354-662 (LVLQCFWAFL…LSDMLSFVVQ (309 aa)). At 367 to 393 (LSFIPTVLLKRILEYVEDQSSAPSNLA) the chain is on the lumenal side. The helical transmembrane segment at 394-414 (WFYVTVMFVGRILVAICQAQA) threads the bilayer. At 415–495 (LFFGRRVCIR…AFKVSEICGY (81 aa)) the chain is on the cytoplasmic side. Residues 445-468 (NKTKPSNEDPQEINDQKSINGDEE) are disordered. A helical transmembrane segment spans residues 496–516 (LHSFLEAFVMTVVALALLYRL). Topologically, residues 517–519 (LGF) are lumenal. A helical membrane pass occupies residues 520 to 540 (AAIVGVLIIVAMLPLNYKLAK). The Cytoplasmic portion of the chain corresponds to 541 to 602 (YIGDLQKKNL…LLLMRSIVWS (62 aa)). The chain crosses the membrane as a helical span at residues 603–623 (ISSFLWFVTPTIVTAASFAYY). Residues 624–644 (IYVQGEVLTTPVAFTALSLFT) lie on the Lumenal side of the membrane. Residues 645–665 (LLRDPLDRLSDMLSFVVQSKV) form a helical membrane-spanning segment. At 666 to 1053 (SLDRVQDFLN…SWWVRAWASH (388 aa)) the chain is on the cytoplasmic side. One can recognise an ABC transporter 1 domain in the interval 694–935 (FAFENSTISW…GLFGEDELVK (242 aa)). 729–736 (GPTGSGKT) contacts ATP. Residues serine 936, serine 940, and serine 955 each carry the phosphoserine modification. The 320-residue stretch at 1026 to 1345 (VSFLASLFLI…LVRLYSEVEM (320 aa)) folds into the ABC transmembrane type-1 2 domain. The helical transmembrane segment at 1054-1074 (NVIAKIIPRAQRAIAFISKKA) threads the bilayer. At 1075–1114 (SHLIDWRGSSQISMASAENQPSSGHSTMYYLVLYLIIGFA) the chain is on the lumenal side. A helical membrane pass occupies residues 1115-1135 (QALLGAGKTILNFVAGINASR). The Cytoplasmic portion of the chain corresponds to 1136–1178 (KIFNMILNKVLHSKIRFFDATPTGRIMNRFSKDIEAIDQELTP). Residues 1179–1199 (YIQGAFYSLIECLSTVILITF) traverse the membrane as a helical segment. Residue isoleucine 1200 is a topological domain, lumenal. Residues 1201–1221 (TPQFLSVAIVVSILYYFVGYF) form a helical membrane-spanning segment. The Cytoplasmic segment spans residues 1222–1292 (YMAGSRELKR…VANRWLAFRI (71 aa)). Residues 1293–1313 (DMIGSLVIFGAGLFILFNINN) traverse the membrane as a helical segment. At 1314–1315 (LD) the chain is on the lumenal side. Residues 1316–1336 (SGMAGISLTYAISFTEGALWL) traverse the membrane as a helical segment. Residues 1337-1661 (VRLYSEVEMN…FVEKLNSKKD (325 aa)) are Cytoplasmic-facing. Residues 1381–1636 (IEVNDLSLRY…KQSAFYSMCE (256 aa)) enclose the ABC transporter 2 domain. Residue 1415–1422 (GRTGAGKS) coordinates ATP.

Belongs to the ABC transporter superfamily. ABCC family. Conjugate transporter (TC 3.A.1.208) subfamily.

It localises to the vacuole membrane. Its function is as follows. Vacuolar class C ABC transporter which regulates the translocation of phosphatidylcholine to the vacuole lumen, the release of lumenal calcium stores, and acts as a negative regulator of vacuole fusion. Exhibits ATP-dependent bile acid transport. In Saccharomyces cerevisiae (strain ATCC 204508 / S288c) (Baker's yeast), this protein is ATP-dependent bile acid permease (YBT1).